The following is a 643-amino-acid chain: Pseudouridylate synthase PUS7L (643 aa).

Asp284 functions as the Nucleophile in the catalytic mechanism. A TRUD domain is found at 370 to 597; the sequence is GFVNYYGPQR…PGCYRPLLAK (228 aa).

It belongs to the pseudouridine synthase TruD family.

The enzyme catalyses a uridine in mRNA = a pseudouridine in mRNA. In terms of biological role, pseudouridine synthase that catalyzes pseudouridylation of mRNAs. This is Pseudouridylate synthase PUS7L (pus7l) from Danio rerio (Zebrafish).